Here is a 342-residue protein sequence, read N- to C-terminus: Galactose mutarotase (342 aa).

Position 14 is a phosphoserine (S14). Residues 81 to 82 (NR) and H107 contribute to the beta-D-galactose site. S124 bears the Phosphoserine mark. H176 acts as the Proton donor in catalysis. Beta-D-galactose is bound by residues 176–178 (HSY), D243, Q279, and E307. E307 acts as the Proton acceptor in catalysis.

It belongs to the aldose epimerase family. As to quaternary structure, monomer.

It localises to the cytoplasm. It carries out the reaction alpha-D-galactose = beta-D-galactose. It catalyses the reaction alpha-D-glucose = beta-D-glucose. Its pathway is carbohydrate metabolism; hexose metabolism. It functions in the pathway carbohydrate metabolism; galactose metabolism. In terms of biological role, mutarotase that catalyzes the interconversion of beta-D-galactose and alpha-D-galactose during galactose metabolism. Beta-D-galactose is metabolized in the liver into glucose 1-phosphate, the primary metabolic fuel, by the action of four enzymes that constitute the Leloir pathway: GALM, GALK1 (galactokinase), GALT (galactose-1-phosphate uridylyltransferase) and GALE (UDP-galactose-4'-epimerase). Involved in the maintenance of the equilibrium between the beta- and alpha-anomers of galactose, therefore ensuring a sufficient supply of the alpha-anomer for GALK1. Also active on D-glucose although shows a preference for galactose over glucose. The protein is Galactose mutarotase (Galm) of Rattus norvegicus (Rat).